The following is a 200-amino-acid chain: GTP cyclohydrolase-2 (200 aa).

50–54 serves as a coordination point for GTP; that stretch reads RVHSE. Cysteine 55, cysteine 66, and cysteine 68 together coordinate Zn(2+). GTP contacts are provided by residues glutamine 71, 93–95, and threonine 115; that span reads EGR. The active-site Proton acceptor is the aspartate 127. Catalysis depends on arginine 129, which acts as the Nucleophile. Residues threonine 150 and lysine 155 each contribute to the GTP site.

It belongs to the GTP cyclohydrolase II family. It depends on Zn(2+) as a cofactor.

The catalysed reaction is GTP + 4 H2O = 2,5-diamino-6-hydroxy-4-(5-phosphoribosylamino)-pyrimidine + formate + 2 phosphate + 3 H(+). It participates in cofactor biosynthesis; riboflavin biosynthesis; 5-amino-6-(D-ribitylamino)uracil from GTP: step 1/4. Catalyzes the conversion of GTP to 2,5-diamino-6-ribosylamino-4(3H)-pyrimidinone 5'-phosphate (DARP), formate and pyrophosphate. In Acinetobacter baumannii (strain AB0057), this protein is GTP cyclohydrolase-2.